Consider the following 266-residue polypeptide: Putative transmembrane ascorbate-dependent reductase CYB561 homolog (266 aa).

Over methionine 1–asparagine 22 the chain is Cytoplasmic. The helical transmembrane segment at isoleucine 23 to methionine 43 threads the bilayer. A Cytochrome b561 domain is found at methionine 27 to leucine 240. The Vesicular segment spans residues serine 44–asparagine 61. The chain crosses the membrane as a helical span at residues tyrosine 62–tyrosine 82. 3 residues coordinate heme b: histidine 63, arginine 83, and lysine 90. Residues arginine 83–threonine 95 lie on the Cytoplasmic side of the membrane. L-ascorbate is bound by residues lysine 90 and lysine 94. A helical transmembrane segment spans residues leucine 96–phenylalanine 116. Residues histidine 97, asparagine 134–serine 137, and histidine 139 contribute to the heme b site. The Vesicular segment spans residues aspartate 117–tryptophan 141. A helical transmembrane segment spans residues isoleucine 142 to phenylalanine 162. Over phenylalanine 163 to proline 176 the chain is Cytoplasmic. Arginine 171 lines the L-ascorbate pocket. A helical transmembrane segment spans residues phenylalanine 177–isoleucine 197. Heme b-binding residues include histidine 178 and glutamate 199. Over serine 198–alanine 219 the chain is Vesicular. A helical transmembrane segment spans residues threonine 220–leucine 240. Over asparagine 241–aspartate 266 the chain is Cytoplasmic. Position 245 (lysine 245) interacts with heme b.

Requires heme b as cofactor.

Its subcellular location is the membrane. It carries out the reaction monodehydro-L-ascorbate radical(out) + L-ascorbate(in) = monodehydro-L-ascorbate radical(in) + L-ascorbate(out). Functionally, putative transmembrane reductase that uses ascorbate as an electron donor in the cytoplasm and transfers electrons across membranes to reduce monodehydro-L-ascorbate radical in the lumen of secretory vesicles. The sequence is that of Putative transmembrane ascorbate-dependent reductase CYB561 homolog from Caenorhabditis elegans.